A 481-amino-acid chain; its full sequence is Proline--tRNA ligase (481 aa).

Belongs to the class-II aminoacyl-tRNA synthetase family. ProS type 3 subfamily. As to quaternary structure, homodimer.

It localises to the cytoplasm. The catalysed reaction is tRNA(Pro) + L-proline + ATP = L-prolyl-tRNA(Pro) + AMP + diphosphate. Functionally, catalyzes the attachment of proline to tRNA(Pro) in a two-step reaction: proline is first activated by ATP to form Pro-AMP and then transferred to the acceptor end of tRNA(Pro). The sequence is that of Proline--tRNA ligase from Pelodictyon phaeoclathratiforme (strain DSM 5477 / BU-1).